The primary structure comprises 244 residues: Ureidoacrylate amidohydrolase RutB (244 aa).

Catalysis depends on D38, which acts as the Proton acceptor. K147 is an active-site residue. The Nucleophile role is filled by C180.

It belongs to the isochorismatase family. RutB subfamily.

The enzyme catalyses (Z)-3-ureidoacrylate + H2O + H(+) = (Z)-3-aminoacrylate + NH4(+) + CO2. It catalyses the reaction (Z)-3-ureidoacrylate + H2O = (Z)-3-aminoacrylate + carbamate + H(+). It carries out the reaction (Z)-2-methylureidoacrylate + H2O + H(+) = (Z)-2-methylaminoacrylate + NH4(+) + CO2. Hydrolyzes ureidoacrylate to form aminoacrylate and carbamate. The carbamate hydrolyzes spontaneously, thereby releasing one of the nitrogen atoms of the pyrimidine ring as ammonia and one of its carbon atoms as CO2. The chain is Ureidoacrylate amidohydrolase RutB from Shigella sonnei (strain Ss046).